The primary structure comprises 29 residues: Frontoxin VI (29 aa).

Cysteine 3 and cysteine 24 are disulfide-bonded.

In terms of tissue distribution, expressed by the venom gland.

It localises to the secreted. Functionally, binds to muscle nicotinic acetylcholine receptor (nAChR) and inhibit acetylcholine from binding to the receptor, thereby impairing neuromuscular transmission. The chain is Frontoxin VI from Micrurus frontalis (Coral snake).